The chain runs to 123 residues: MALTKEDIINAVAEMSVMDVVELISAMEEKFGVSAAAAVAAGPAADAGVAAEEQTEFDVVLTAAGDKKVNVIKAVRAATGLGLKEAKAIVDGAPMTVKEAASKEDAAALKAALEEAGASVEIK.

Belongs to the bacterial ribosomal protein bL12 family. As to quaternary structure, homodimer. Part of the ribosomal stalk of the 50S ribosomal subunit. Forms a multimeric L10(L12)X complex, where L10 forms an elongated spine to which 2 to 4 L12 dimers bind in a sequential fashion. Binds GTP-bound translation factors.

Functionally, forms part of the ribosomal stalk which helps the ribosome interact with GTP-bound translation factors. Is thus essential for accurate translation. The sequence is that of Large ribosomal subunit protein bL12 from Marinomonas sp. (strain MWYL1).